Here is a 46-residue protein sequence, read N- to C-terminus: Major urinary protein (46 aa).

N-linked (GlcNAc...) asparagine glycosylation occurs at N15.

Belongs to the calycin superfamily. Lipocalin family. In terms of tissue distribution, found in many tissues including liver, urine, preputial gland, clitoral gland, submandibular gland and salivary gland.

It is found in the secreted. Binds pheromones that are released from drying urine of males. These pheromones affect the sexual behavior of females. Acts as a shuttle for pheromonal communication between individuals of the same species. This is Major urinary protein from Rattus rattus (Black rat).